The following is a 285-amino-acid chain: Ribosomal RNA large subunit methyltransferase F (285 aa).

Belongs to the methyltransferase superfamily. METTL16/RlmF family.

It is found in the cytoplasm. The catalysed reaction is adenosine(1618) in 23S rRNA + S-adenosyl-L-methionine = N(6)-methyladenosine(1618) in 23S rRNA + S-adenosyl-L-homocysteine + H(+). Specifically methylates the adenine in position 1618 of 23S rRNA. This Christiangramia forsetii (strain DSM 17595 / CGMCC 1.15422 / KT0803) (Gramella forsetii) protein is Ribosomal RNA large subunit methyltransferase F.